The chain runs to 330 residues: Diacylglycerol acyltransferase/mycolyltransferase Ag85B (330 aa).

A signal peptide spans 1-40; sequence MTDLSKKVRAWGRRLLVGTAAAVTLPGLIGLAGGAPTAGA. 82–83 serves as a coordination point for substrate; that stretch reads LR. The tract at residues 98–108 is fibronectin-binding; that stretch reads FEWYYQSGLSI. C127 and C132 are disulfide-bonded. Substrate-binding residues include S166 and D194. The Nucleophile role is filled by S166. E270 is a catalytic residue. Residues 272-275, K279, and 302-304 each bind substrate; these read FVRS and HSW. H302 is an active-site residue.

The protein belongs to the mycobacterial A85 antigen family.

It is found in the secreted. It catalyses the reaction 2 alpha,alpha'-trehalose 6-mycolate = alpha,alpha'-trehalose 6,6'-bismycolate + alpha,alpha-trehalose. It carries out the reaction an acyl-CoA + a 1,2-diacyl-sn-glycerol = a triacyl-sn-glycerol + CoA. Its function is as follows. The antigen 85 proteins (FbpA, FbpB, FbpC) are responsible for the high affinity of mycobacteria for fibronectin, a large adhesive glycoprotein, which facilitates the attachment of M.tuberculosis to murine alveolar macrophages (AMs). They also help to maintain the integrity of the cell wall by catalyzing the transfer of mycolic acids to cell wall arabinogalactan and through the synthesis of alpha,alpha-trehalose dimycolate (TDM, cord factor). They catalyze the transfer of a mycoloyl residue from one molecule of alpha,alpha-trehalose monomycolate (TMM) to another TMM, leading to the formation of TDM. This chain is Diacylglycerol acyltransferase/mycolyltransferase Ag85B (fbpB), found in Mycobacterium scrofulaceum.